The chain runs to 831 residues: Protein translocase subunit SecA (831 aa).

ATP is bound by residues Q88, 106-110 (GEGKT), and D495. Zn(2+)-binding residues include C816, C818, C827, and C828.

It belongs to the SecA family. In terms of assembly, monomer and homodimer. Part of the essential Sec protein translocation apparatus which comprises SecA, SecYEG and auxiliary proteins SecDF-YajC and YidC. The cofactor is Zn(2+).

It is found in the cell membrane. Its subcellular location is the cytoplasm. The enzyme catalyses ATP + H2O + cellular proteinSide 1 = ADP + phosphate + cellular proteinSide 2.. In terms of biological role, part of the Sec protein translocase complex. Interacts with the SecYEG preprotein conducting channel. Has a central role in coupling the hydrolysis of ATP to the transfer of proteins into and across the cell membrane, serving as an ATP-driven molecular motor driving the stepwise translocation of polypeptide chains across the membrane. The sequence is that of Protein translocase subunit SecA from Lawsonia intracellularis (strain PHE/MN1-00).